A 124-amino-acid polypeptide reads, in one-letter code: Flowering-promoting factor 1-like protein 1 (124 aa).

The disordered stretch occupies residues 19–42; sequence PYNQSAGDSSESSSSGGNQQQRMR. Low complexity predominate over residues 22-39; sequence QSAGDSSESSSSGGNQQQ.

It belongs to the FPF1 family. Expressed in roots, flowers, and at a low level, in leaves.

Functionally, modulates the competence to flowering of apical meristems. The chain is Flowering-promoting factor 1-like protein 1 (FLP1) from Arabidopsis thaliana (Mouse-ear cress).